Reading from the N-terminus, the 96-residue chain is Integration host factor subunit beta (96 aa).

Belongs to the bacterial histone-like protein family. In terms of assembly, heterodimer of an alpha and a beta chain.

This protein is one of the two subunits of integration host factor, a specific DNA-binding protein that functions in genetic recombination as well as in transcriptional and translational control. This is Integration host factor subunit beta from Photobacterium profundum (strain SS9).